The sequence spans 280 residues: Protein FLOURY 1-like (280 aa).

A helical membrane pass occupies residues 22–42 (GFGFGIFVIGCSSQFFNLVFL). Positions 153–187 (VALSETELDEKNHHGEEEESEDEEESQSQNDEDQL) are disordered. Residues 169-187 (EEESEDEEESQSQNDEDQL) are compositionally biased toward acidic residues. The GTD-binding domain maps to 188-280 (LDVITLRTMV…LDDDEDKIQM (93 aa)).

It localises to the membrane. The chain is Protein FLOURY 1-like from Arabidopsis thaliana (Mouse-ear cress).